We begin with the raw amino-acid sequence, 89 residues long: Small ribosomal subunit protein uS15 (89 aa).

It belongs to the universal ribosomal protein uS15 family. As to quaternary structure, part of the 30S ribosomal subunit. Forms a bridge to the 50S subunit in the 70S ribosome, contacting the 23S rRNA.

One of the primary rRNA binding proteins, it binds directly to 16S rRNA where it helps nucleate assembly of the platform of the 30S subunit by binding and bridging several RNA helices of the 16S rRNA. Its function is as follows. Forms an intersubunit bridge (bridge B4) with the 23S rRNA of the 50S subunit in the ribosome. This chain is Small ribosomal subunit protein uS15, found in Shouchella clausii (strain KSM-K16) (Alkalihalobacillus clausii).